Here is an 83-residue protein sequence, read N- to C-terminus: Small ribosomal subunit protein bS18 (83 aa).

It belongs to the bacterial ribosomal protein bS18 family. In terms of assembly, part of the 30S ribosomal subunit. Forms a tight heterodimer with protein bS6.

Binds as a heterodimer with protein bS6 to the central domain of the 16S rRNA, where it helps stabilize the platform of the 30S subunit. The chain is Small ribosomal subunit protein bS18 from Cytophaga hutchinsonii (strain ATCC 33406 / DSM 1761 / CIP 103989 / NBRC 15051 / NCIMB 9469 / D465).